The following is a 151-amino-acid chain: UPF0208 membrane protein CKO_00500 (151 aa).

Transmembrane regions (helical) follow at residues 46–65 (YAIR…QIAL) and 69–91 (LGPA…WWLG).

This sequence belongs to the UPF0208 family.

The protein resides in the cell inner membrane. In Citrobacter koseri (strain ATCC BAA-895 / CDC 4225-83 / SGSC4696), this protein is UPF0208 membrane protein CKO_00500.